Reading from the N-terminus, the 179-residue chain is Mediator of RNA polymerase II transcription subunit 28 (179 aa).

The interval 1-43 (MASSMCGMFPGQQPPGSLPPPGPGGPGQPGLLTGTPGNRGANN) is disordered. Pro residues predominate over residues 12–26 (QQPPGSLPPPGPGGP). The stretch at 109–139 (EQVEKEDASELKNELQRKEMLIQKHLAKIHH) forms a coiled coil.

The protein belongs to the Mediator complex subunit 28 family. As to quaternary structure, component of the Mediator complex.

Its subcellular location is the nucleus. Functionally, component of the Mediator complex, a coactivator involved in the regulated transcription of nearly all RNA polymerase II-dependent genes. Mediator functions as a bridge to convey information from gene-specific regulatory proteins to the basal RNA polymerase II transcription machinery. Mediator is recruited to promoters by direct interactions with regulatory proteins and serves as a scaffold for the assembly of a functional preinitiation complex with RNA polymerase II and the general transcription factors. This Danio rerio (Zebrafish) protein is Mediator of RNA polymerase II transcription subunit 28 (med28).